A 446-amino-acid polypeptide reads, in one-letter code: DDB1- and CUL4-associated factor 12-A (446 aa).

The span at methionine 1 to alanine 12 shows a compositional bias: basic residues. The interval methionine 1–lysine 32 is disordered. WD repeat units lie at residues serine 132 to valine 173, glycine 177 to serine 215, proline 245 to leucine 284, and glutamate 333 to aspartate 370.

The protein belongs to the WD repeat DCAF12 family. As to quaternary structure, component of the DCX(DCAF12) E3 ubiquitin ligase complex, at least composed of cul4 (cul4a or cul4b), ddb1, dcaf12 and rbx1.

It is found in the cytoplasm. It localises to the cytoskeleton. The protein resides in the microtubule organizing center. The protein localises to the centrosome. Its subcellular location is the nucleus. It participates in protein modification; protein ubiquitination. In terms of biological role, substrate-recognition component of a DCX (DDB1-CUL4-X-box) E3 ubiquitin-protein ligase complex of the DesCEND (destruction via C-end degrons) pathway, which recognizes a C-degron located at the extreme C terminus of target proteins, leading to their ubiquitination and degradation. The C-degron recognized by the DesCEND pathway is usually a motif of less than ten residues and can be present in full-length proteins, truncated proteins or proteolytically cleaved forms. The DCX(DCAF12) complex specifically recognizes proteins with a diglutamate (Glu-Glu) at the C-terminus leading to their ubiquitination and degradation. Also directly recognizes the C-terminal glutamate-leucine (Glu-Leu) degron as an alternative degron in proteins leading to their ubiquitination and degradation. The chain is DDB1- and CUL4-associated factor 12-A (dcaf12-a) from Xenopus laevis (African clawed frog).